A 304-amino-acid polypeptide reads, in one-letter code: Putative integrase/recombinase HI_1414 (304 aa).

Positions 30–109 (TLFSDVIKRY…TIGHIFKIAL (80 aa)) constitute a Core-binding (CB) domain. Residues 131-304 (PRTQRVTEEN…DMAEVAELLD (174 aa)) form the Tyr recombinase domain. Residues Arg174, Lys199, His256, Arg259, and His281 contribute to the active site. Tyr291 functions as the O-(3'-phospho-DNA)-tyrosine intermediate in the catalytic mechanism.

It belongs to the 'phage' integrase family.

The polypeptide is Putative integrase/recombinase HI_1414 (Haemophilus influenzae (strain ATCC 51907 / DSM 11121 / KW20 / Rd)).